A 144-amino-acid polypeptide reads, in one-letter code: Large ribosomal subunit protein uL16 (144 aa).

It belongs to the universal ribosomal protein uL16 family. In terms of assembly, part of the 50S ribosomal subunit.

Its function is as follows. Binds 23S rRNA and is also seen to make contacts with the A and possibly P site tRNAs. The sequence is that of Large ribosomal subunit protein uL16 from Lysinibacillus sphaericus (strain C3-41).